Reading from the N-terminus, the 496-residue chain is MDDKQHTTSSDDERAENATSNQDQQTNSSKRVHLKRWQFISILIGTIIITAVITVVAYIFINQKISGLNKTDQANLNKIENVYKILNSDYYKKQNSDKLSKAAIDGMVKELKDPYSEYLTKEQTKSFNEGVSGDFVGIGAEMQKKNDQIMVTSPMKGSPAERAGIRPKDVITKVNGKSIKGKALDEVVKDVRGKENTEVTLTVQRGSEEKDVKIKREKIHVKSVEYKKKGKVGVITINKFQNDTSGELKDAVLKAHKDGLKKIVLDLRNNPGGLLDEAVKMANIFIDKGKTVVKLEKGKDTEAIQTSNDALKEAKDMDISILVNEGSASASEVFTGALKDYNKAKVYGSKTFGKGVVQTTREFKDGSLLKYTEMKWLTPDGHYIHGKGIKPDVTIDTPKYQSLNVIPNTKTFKVGDDDKNIKTIKIGLSALGYKVDNESTQFDQALENLVKAFQQANKLEVTGEFNKETNNKFTELLVEKANKHDDVLDKLINILK.

Positions 1-16 (MDDKQHTTSSDDERAE) are enriched in basic and acidic residues. Positions 1–27 (MDDKQHTTSSDDERAENATSNQDQQTN) are disordered. The segment covering 17-27 (NATSNQDQQTN) has biased composition (polar residues). Residues 39–59 (FISILIGTIIITAVITVVAYI) form a helical membrane-spanning segment. A PDZ domain is found at 124–206 (TKSFNEGVSG…TEVTLTVQRG (83 aa)). Catalysis depends on charge relay system residues serine 329, aspartate 340, and lysine 354.

This sequence belongs to the peptidase S41A family.

It is found in the cell membrane. This Staphylococcus aureus (strain MRSA252) protein is Probable CtpA-like serine protease.